The primary structure comprises 374 residues: MHSRSALLYRFLRPASRCFSSSSAVTPVTVTQSPKSLEALRARLANESPSLTDFIHGDTYSVEVGTKKKPLPKPKWMKESIPGGERYVQIKKKLRDLKLHTVCEEAKCPNLGECWSGGETGTATATIMILGDTCTRGCRFCNVKTSRTPPPPDPNEPNNVAEAIASWGVDYVVITSVDRDDLPDQGSGHFAETVQRLKFLKPEMLIEALVPDFRGDGGCVEKVSKSGLDVLAHNIETVEELQSFVRDHRANFKQSLDVLRMAKEYAPAGTLTKTSVMLGCGETPDQVVKTMEKVRAAGVDVMTFGQYMRPSKRHMPVAEYVTPDAFERYRLLGMEMGFRYVASGPMVRSSYKAGEYYIKSMIEADRVASPSTSP.

Residues Met1 to Phe19 constitute a mitochondrion transit peptide. Positions 103, 108, 114, 134, 138, 141, and 350 each coordinate [4Fe-4S] cluster. The Radical SAM core domain occupies Glu119 to Arg339.

It belongs to the radical SAM superfamily. Lipoyl synthase family. The cofactor is [4Fe-4S] cluster. As to expression, expressed in leaves and flowers, but not in roots. Expressed in roots, rosette leaves, cauline leaves, stems, flowers and siliques.

The protein resides in the mitochondrion. It catalyses the reaction [[Fe-S] cluster scaffold protein carrying a second [4Fe-4S](2+) cluster] + N(6)-octanoyl-L-lysyl-[protein] + 2 oxidized [2Fe-2S]-[ferredoxin] + 2 S-adenosyl-L-methionine + 4 H(+) = [[Fe-S] cluster scaffold protein] + N(6)-[(R)-dihydrolipoyl]-L-lysyl-[protein] + 4 Fe(3+) + 2 hydrogen sulfide + 2 5'-deoxyadenosine + 2 L-methionine + 2 reduced [2Fe-2S]-[ferredoxin]. It participates in protein modification; protein lipoylation via endogenous pathway; protein N(6)-(lipoyl)lysine from octanoyl-[acyl-carrier-protein]: step 2/2. In terms of biological role, catalyzes the radical-mediated insertion of two sulfur atoms into the C-6 and C-8 positions of the octanoyl moiety bound to the lipoyl domains of lipoate-dependent enzymes, thereby converting the octanoylated domains into lipoylated derivatives. Together with LIP2 is essential for mitochondrial protein lipoylation during seed development. Required for the lipoylation of mitochondrial pyruvate dehydrogenase component E2 proteins in leaves and roots. This chain is Lipoyl synthase, mitochondrial, found in Arabidopsis thaliana (Mouse-ear cress).